The following is a 1201-amino-acid chain: ATP-dependent helicase/deoxyribonuclease subunit B (1201 aa).

It belongs to the helicase family. AddB/RexB type 2 subfamily. As to quaternary structure, heterodimer of AddA and RexB. Mg(2+) is required as a cofactor.

In terms of biological role, the heterodimer acts as both an ATP-dependent DNA helicase and an ATP-dependent, dual-direction single-stranded exonuclease. Recognizes the chi site generating a DNA molecule suitable for the initiation of homologous recombination. This subunit has 5' -&gt; 3' nuclease activity but not helicase activity. This is ATP-dependent helicase/deoxyribonuclease subunit B from Levilactobacillus brevis (strain ATCC 367 / BCRC 12310 / CIP 105137 / JCM 1170 / LMG 11437 / NCIMB 947 / NCTC 947) (Lactobacillus brevis).